We begin with the raw amino-acid sequence, 274 residues long: Large ribosomal subunit protein uL2cz/uL2cy (274 aa).

Disordered stretches follow at residues 1–23 (MAIH…SQVK) and 223–274 (MNPV…RRSK).

This sequence belongs to the universal ribosomal protein uL2 family. Part of the 50S ribosomal subunit.

Its subcellular location is the plastid. The protein resides in the chloroplast. In Ranunculus macranthus (Large buttercup), this protein is Large ribosomal subunit protein uL2cz/uL2cy (rpl2-A).